The chain runs to 3421 residues: Large tegument protein deneddylase (3421 aa).

Residues 1 to 248 form a deubiquitination activity region; the sequence is MAQTLVPANK…SETYLSDEQY (248 aa). Residues 19 to 238 form the Peptidase C76 domain; that stretch reads VVIGYRNQYD…ISATSLLYGI (220 aa). Active-site residues include Cys39, Asp172, and His174. The disordered stretch occupies residues 311-351; sequence QPTEKRVSLPKRRRPPWTPPTSSENLTTSGNTHTVAGRPSQ. Residues 332-344 show a composition bias toward polar residues; that stretch reads SSENLTTSGNTHT. Residues 482-508 are interaction with inner tegument protein; sequence LEQFITMIFNRLLSFLVENGARTRTDS. Disordered stretches follow at residues 2407–2442 and 2479–3195; these read ESNP…PTGI and SNAM…RKNI. Positions 2415–2432 are enriched in low complexity; that stretch reads SHDSSQSLDVPSSPSSGS. Composition is skewed to pro residues over residues 2506-2516, 2541-2556, 2565-2577, 2586-2598, and 2607-2619; these read TLPPKAAPLPP, PSVP…PPLP, and GPPP…PPLP. Polar residues-rich tracts occupy residues 2620–2637 and 2778–2787; these read QSTS…SGKT and SDSNVTQSTK. Positions 2797–2857 are enriched in low complexity; that stretch reads PAAAPAKSAA…SAAAPAAAPA (61 aa). Positions 2869–2895 are enriched in basic and acidic residues; sequence KPAKDQAKDQAKDQAKDQAKDQAKDQA. Over residues 2953–2969 the composition is skewed to polar residues; sequence LSASKNSHTTDAVSSDR. Basic and acidic residues-rich tracts occupy residues 3023 to 3040 and 3088 to 3097; these read RKSD…RRAF and CSEEPKRPTG. The span at 3120–3146 shows a compositional bias: polar residues; that stretch reads IPQNQNTSESPRTTSLKSPTRTVQSSM. The span at 3171 to 3188 shows a compositional bias: pro residues; sequence PQPPPANQTPPPQEPPAP.

This sequence belongs to the herpesviridae large tegument protein family. As to quaternary structure, interacts with host CUL1 and CUL4A; these interactions inhibit the E3 ligase activity of cullins. Interacts with inner tegument protein. Interacts with capsid vertex specific component CVC2. Interacts with the major capsid protein/MCP.

It localises to the virion tegument. It is found in the host cytoplasm. Its subcellular location is the host nucleus. It carries out the reaction Thiol-dependent hydrolysis of ester, thioester, amide, peptide and isopeptide bonds formed by the C-terminal Gly of ubiquitin (a 76-residue protein attached to proteins as an intracellular targeting signal).. Its function is as follows. Large tegument protein that plays multiple roles in the viral cycle. During viral entry, remains associated with the capsid while most of the tegument is detached and participates in the capsid transport toward the host nucleus. Plays a role in the routing of the capsid at the nuclear pore complex and subsequent uncoating. Within the host nucleus, acts as a deneddylase and promotes the degradation of nuclear CRLs (cullin-RING ubiquitin ligases) and thereby stabilizes nuclear CRL substrates, while cytoplasmic CRLs remain unaffected. These modifications prevent host cell cycle S-phase progression and create a favorable environment allowing efficient viral genome replication. Participates later in the secondary envelopment of capsids. Indeed, plays a linker role for the association of the outer viral tegument to the capsids together with the inner tegument protein. The polypeptide is Large tegument protein deneddylase (Equus caballus (Horse)).